A 596-amino-acid chain; its full sequence is Uptake hydrogenase large subunit (596 aa).

C75, C78, C575, and C578 together coordinate Ni(2+).

The protein belongs to the [NiFe]/[NiFeSe] hydrogenase large subunit family. As to quaternary structure, heterodimer of a large and a small subunit. Ni(2+) serves as cofactor.

The protein localises to the cell membrane. It carries out the reaction H2 + A = AH2. In terms of biological role, this enzyme recycles the H(2) produced by nitrogenase to increase the production of ATP and to protect nitrogenase against inhibition or damage by O(2) under carbon- or phosphate-limited conditions. This chain is Uptake hydrogenase large subunit (hupB), found in Rhizobium leguminosarum bv. viciae.